The sequence spans 165 residues: E3 ubiquitin-protein ligase RNF181 (165 aa).

The RING-type; atypical zinc-finger motif lies at 88-129; sequence CPVCLLEFEEEETVIEMPCHHLFHSNCILPWLSKTNSCPLCR. Positions 136-165 are disordered; the sequence is DDSYEEHKKDKARRQQQQHRLENLHGAMYT. A Phosphothreonine modification is found at T165.

Belongs to the RNF181 family. As to quaternary structure, directly interacts with ITGA2B and, as a result, with integrin ITGA2B/ITGB3. There is no evidence that integrin ITGA2B/ITGB3 is an endogenous substrate for RNF181-directed ubiquitination. Auto-ubiquitinated as part of the enzymatic reaction.

It carries out the reaction S-ubiquitinyl-[E2 ubiquitin-conjugating enzyme]-L-cysteine + [acceptor protein]-L-lysine = [E2 ubiquitin-conjugating enzyme]-L-cysteine + N(6)-ubiquitinyl-[acceptor protein]-L-lysine.. It functions in the pathway protein modification; protein ubiquitination. E3 ubiquitin-protein ligase which accepts ubiquitin from an E2 ubiquitin-conjugating enzyme in the form of a thioester and then directly transfers the ubiquitin to targeted substrates. Catalyzes monoubiquitination of 26S proteasome subunit PSMC2/RPT1. The polypeptide is E3 ubiquitin-protein ligase RNF181 (Rnf181) (Rattus norvegicus (Rat)).